Reading from the N-terminus, the 375-residue chain is Aminomethyltransferase (375 aa).

This sequence belongs to the GcvT family. As to quaternary structure, the glycine cleavage system is composed of four proteins: P, T, L and H.

The enzyme catalyses N(6)-[(R)-S(8)-aminomethyldihydrolipoyl]-L-lysyl-[protein] + (6S)-5,6,7,8-tetrahydrofolate = N(6)-[(R)-dihydrolipoyl]-L-lysyl-[protein] + (6R)-5,10-methylene-5,6,7,8-tetrahydrofolate + NH4(+). Functionally, the glycine cleavage system catalyzes the degradation of glycine. This is Aminomethyltransferase from Cupriavidus necator (strain ATCC 17699 / DSM 428 / KCTC 22496 / NCIMB 10442 / H16 / Stanier 337) (Ralstonia eutropha).